A 146-amino-acid polypeptide reads, in one-letter code: DNA-binding protein Rv2175c (146 aa).

The tract at residues 1–27 (MPGRAPGSTLARVGSIPAGDDVLDPDE) is disordered. Phosphothreonine is present on T9.

In terms of assembly, monomer in solution. May form homodimers. Interacts with phosphorylated PknL. Phosphorylated by PknL. Phosphorylation negatively regulates DNA-binding activity.

Binds DNA at low salt concentrations. This chain is DNA-binding protein Rv2175c, found in Mycobacterium tuberculosis (strain ATCC 25618 / H37Rv).